A 262-amino-acid chain; its full sequence is Tryptophan synthase alpha chain (262 aa).

Active-site proton acceptor residues include Glu-47 and Asp-58.

It belongs to the TrpA family. As to quaternary structure, tetramer of two alpha and two beta chains.

The catalysed reaction is (1S,2R)-1-C-(indol-3-yl)glycerol 3-phosphate + L-serine = D-glyceraldehyde 3-phosphate + L-tryptophan + H2O. It functions in the pathway amino-acid biosynthesis; L-tryptophan biosynthesis; L-tryptophan from chorismate: step 5/5. Functionally, the alpha subunit is responsible for the aldol cleavage of indoleglycerol phosphate to indole and glyceraldehyde 3-phosphate. The sequence is that of Tryptophan synthase alpha chain from Chromobacterium violaceum (strain ATCC 12472 / DSM 30191 / JCM 1249 / CCUG 213 / NBRC 12614 / NCIMB 9131 / NCTC 9757 / MK).